Consider the following 155-residue polypeptide: 6,7-dimethyl-8-ribityllumazine synthase (155 aa).

5-amino-6-(D-ribitylamino)uracil contacts are provided by residues F22, 56 to 58 (AFE), and 80 to 82 (AVI). 85 to 86 (AT) contacts (2S)-2-hydroxy-3-oxobutyl phosphate. H88 functions as the Proton donor in the catalytic mechanism. F113 lines the 5-amino-6-(D-ribitylamino)uracil pocket. (2S)-2-hydroxy-3-oxobutyl phosphate is bound at residue R127.

This sequence belongs to the DMRL synthase family.

The catalysed reaction is (2S)-2-hydroxy-3-oxobutyl phosphate + 5-amino-6-(D-ribitylamino)uracil = 6,7-dimethyl-8-(1-D-ribityl)lumazine + phosphate + 2 H2O + H(+). Its pathway is cofactor biosynthesis; riboflavin biosynthesis; riboflavin from 2-hydroxy-3-oxobutyl phosphate and 5-amino-6-(D-ribitylamino)uracil: step 1/2. Catalyzes the formation of 6,7-dimethyl-8-ribityllumazine by condensation of 5-amino-6-(D-ribitylamino)uracil with 3,4-dihydroxy-2-butanone 4-phosphate. This is the penultimate step in the biosynthesis of riboflavin. The protein is 6,7-dimethyl-8-ribityllumazine synthase of Clostridium acetobutylicum (strain ATCC 824 / DSM 792 / JCM 1419 / IAM 19013 / LMG 5710 / NBRC 13948 / NRRL B-527 / VKM B-1787 / 2291 / W).